Consider the following 67-residue polypeptide: Large ribosomal subunit protein bL35 (67 aa).

Residues 1–41 (MPKMKTHRGAAKRFKKTGTGKLKRSHAYTSHMFRHKSQKQK) are disordered.

It belongs to the bacterial ribosomal protein bL35 family.

The sequence is that of Large ribosomal subunit protein bL35 from Shouchella clausii (strain KSM-K16) (Alkalihalobacillus clausii).